Here is a 153-residue protein sequence, read N- to C-terminus: 3-hydroxyacyl-[acyl-carrier-protein] dehydratase FabZ (153 aa).

The active site involves histidine 56.

Belongs to the thioester dehydratase family. FabZ subfamily.

Its subcellular location is the cytoplasm. It carries out the reaction a (3R)-hydroxyacyl-[ACP] = a (2E)-enoyl-[ACP] + H2O. Involved in unsaturated fatty acids biosynthesis. Catalyzes the dehydration of short chain beta-hydroxyacyl-ACPs and long chain saturated and unsaturated beta-hydroxyacyl-ACPs. The sequence is that of 3-hydroxyacyl-[acyl-carrier-protein] dehydratase FabZ from Nitrosomonas europaea (strain ATCC 19718 / CIP 103999 / KCTC 2705 / NBRC 14298).